A 512-amino-acid chain; its full sequence is Glutathione-binding protein GsiB (512 aa).

Residues 1–26 form the signal peptide; that stretch reads MTQFITHKWLAALGLASSIAAFPALA.

This sequence belongs to the bacterial solute-binding protein 5 family. In terms of assembly, the complex is composed of two ATP-binding proteins (GsiA), two transmembrane proteins (GsiC and GsiD) and a solute-binding protein (GsiB).

The protein resides in the periplasm. Part of the ABC transporter complex GsiABCD involved in glutathione import. Binds glutathione. This Salmonella typhimurium (strain LT2 / SGSC1412 / ATCC 700720) protein is Glutathione-binding protein GsiB.